The sequence spans 397 residues: Homoserine O-acetyltransferase (397 aa).

Positions asparagine 58–leucine 368 constitute an AB hydrolase-1 domain. Serine 164 serves as the catalytic Nucleophile. Arginine 233 lines the substrate pocket. Catalysis depends on residues aspartate 331 and histidine 364. Aspartate 365 is a substrate binding site.

It belongs to the AB hydrolase superfamily. MetX family. As to quaternary structure, homodimer.

Its subcellular location is the cytoplasm. It carries out the reaction L-homoserine + acetyl-CoA = O-acetyl-L-homoserine + CoA. It functions in the pathway amino-acid biosynthesis; L-methionine biosynthesis via de novo pathway; O-acetyl-L-homoserine from L-homoserine: step 1/1. Functionally, transfers an acetyl group from acetyl-CoA to L-homoserine, forming acetyl-L-homoserine. This is Homoserine O-acetyltransferase from Solidesulfovibrio magneticus (strain ATCC 700980 / DSM 13731 / RS-1) (Desulfovibrio magneticus).